A 242-amino-acid chain; its full sequence is Phosphatidylcholine synthase (242 aa).

Over 1-15 the chain is Cytoplasmic; it reads MKIFNYKRVPYAEMR. Residues 16 to 36 form a helical membrane-spanning segment; sequence AFSVHILTASGSFLAFLGVVA. Residues 37–41 lie on the Periplasmic side of the membrane; sequence AAEHR. Residues 42–62 form a helical membrane-spanning segment; that stretch reads FIDMFWWLGLALLVDGIDGPI. The Cytoplasmic segment spans residues 63–76; sequence ARKVRVKEVLPNWS. Residues 77-97 form a helical membrane-spanning segment; the sequence is GDTLDNIIDYVTYVLLPAFAL. Residues 98–100 are Periplasmic-facing; it reads YQS. The helical transmembrane segment at 101 to 121 threads the bilayer; sequence GMIGEPWSFVAAGMIVVSSAI. Residues 122-133 lie on the Cytoplasmic side of the membrane; the sequence is YYADMGMKTDEY. The chain crosses the membrane as a helical span at residues 134–154; the sequence is FFSGFPVVWNMIVFTLFVIDA. Residues 155-159 are Periplasmic-facing; the sequence is SATTA. A helical transmembrane segment spans residues 160 to 180; the sequence is LTVVIVSVVLTFLPINFLHPV. Over 181–187 the chain is Cytoplasmic; the sequence is RVKRLRP. A helical transmembrane segment spans residues 188–208; the sequence is LNLGVFFLWSALGIFSLLMHF. The Periplasmic portion of the chain corresponds to 209-214; it reads DTPEWA. A helical transmembrane segment spans residues 215 to 235; that stretch reads LILFIVTGAYLYVIGAVLQFF. Residues 236 to 242 lie on the Cytoplasmic side of the membrane; the sequence is PALGRET.

It belongs to the CDP-alcohol phosphatidyltransferase class-I family. Mn(2+) serves as cofactor.

It localises to the cell inner membrane. It catalyses the reaction a CDP-1,2-diacyl-sn-glycerol + choline = a 1,2-diacyl-sn-glycero-3-phosphocholine + CMP + H(+). Functionally, condenses choline with CDP-diglyceride to produce phosphatidylcholine and CMP. The chain is Phosphatidylcholine synthase from Rhizobium johnstonii (strain DSM 114642 / LMG 32736 / 3841) (Rhizobium leguminosarum bv. viciae).